A 37-amino-acid chain; its full sequence is Large ribosomal subunit protein bL36 (37 aa).

Belongs to the bacterial ribosomal protein bL36 family.

The polypeptide is Large ribosomal subunit protein bL36 (Bacillus anthracis (strain A0248)).